The following is a 776-amino-acid chain: Transferrin receptor protein 1 (776 aa).

The Cytoplasmic portion of the chain corresponds to 1 to 70; the sequence is MDHARAALSN…QPQRNGKRLC (70 aa). Positions 19-22 match the Endocytosis signal motif; that stretch reads YTRF. S23 bears the Phosphoserine mark. C70 carries the S-palmitoyl cysteine lipid modification. A helical; Signal-anchor for type II membrane protein transmembrane segment spans residues 71–91; that stretch reads FLVIAAVLLLLIGFLIGYLSY. Residues 92–776 are Extracellular-facing; sequence RGRIELAARC…GDIWETDNEF (685 aa). The PA domain occupies 230–322; that stretch reads SESGSVSGKP…GTGDPYTPGF (93 aa). Residues N261, N326, and N391 are each glycosylated (N-linked (GlcNAc...) asparagine). The interval 586–776 is ligand-binding; that stretch reads KGDTLENLRK…GDIWETDNEF (191 aa). Positions 662–664 match the Cell attachment site motif; the sequence is RGD. N738 carries an N-linked (GlcNAc...) asparagine glycan.

Belongs to the peptidase M28 family. M28B subfamily. As to quaternary structure, homodimer; disulfide-linked. Binds one transferrin molecule per subunit. Post-translationally, stearoylated. Stearoylation does not affect iron uptake. N- and O-glycosylated, phosphorylated and palmitoylated.

The protein resides in the cell membrane. The protein localises to the melanosome. In terms of biological role, cellular uptake of iron occurs via receptor-mediated endocytosis of ligand-occupied transferrin receptor into specialized endosomes. Endosomal acidification leads to iron release. The apotransferrin-receptor complex is then recycled to the cell surface with a return to neutral pH and the concomitant loss of affinity of apotransferrin for its receptor. Transferrin receptor is necessary for development of erythrocytes and the nervous system. Acts as a lipid sensor that regulates mitochondrial fusion by regulating activation of the JNK pathway. When dietary levels of stearate (C18:0) are low, promotes activation of the JNK pathway, resulting in HUWE1-mediated ubiquitination and subsequent degradation of the mitofusin MFN2 and inhibition of mitochondrial fusion. When dietary levels of stearate (C18:0) are high, TFRC stearoylation inhibits activation of the JNK pathway and thus degradation of the mitofusin MFN2. Mediates uptake of NICOL1 into fibroblasts where it may regulate extracellular matrix production. In Gallus gallus (Chicken), this protein is Transferrin receptor protein 1 (TFRC).